A 300-amino-acid polypeptide reads, in one-letter code: Ribosomal protein bS6--L-glutamate ligase (300 aa).

The ATP-grasp domain maps to Met-104–Glu-287. ATP is bound by residues Lys-141, Glu-178 to Tyr-179, Asp-187, and Arg-211 to Asn-213. Mg(2+)-binding residues include Asp-248, Glu-260, and Asn-262. Mn(2+) contacts are provided by Asp-248, Glu-260, and Asn-262.

This sequence belongs to the RimK family. Mg(2+) serves as cofactor. It depends on Mn(2+) as a cofactor.

In terms of biological role, an L-glutamate ligase that catalyzes the ATP-dependent post-translational addition of glutamate residues to the C-terminus of ribosomal protein bS6 (RpsF). Is also able to catalyze the synthesis of poly-alpha-glutamate in vitro, via ATP hydrolysis from unprotected glutamate as substrate. The number of glutamate residues added to either RpsF or to poly-alpha-glutamate changes with pH. In Escherichia coli O81 (strain ED1a), this protein is Ribosomal protein bS6--L-glutamate ligase.